A 35-amino-acid polypeptide reads, in one-letter code: Potassium channel toxin (35 aa).

Cystine bridges form between cysteine 6-cysteine 25, cysteine 11-cysteine 30, and cysteine 15-cysteine 32.

It belongs to the short scorpion toxin superfamily. Potassium channel inhibitor family. Alpha-KTx 21 subfamily. As to expression, expressed by the venom gland.

It is found in the secreted. Toxin that blocks voltage-gated potassium channels (Kv). In Tityus metuendus (Scorpion), this protein is Potassium channel toxin.